Consider the following 346-residue polypeptide: Peripherin-2 (346 aa).

Over 1–24 the chain is Cytoplasmic; sequence MALMKTKFNLKRRVKLAQGLWLMN. The chain crosses the membrane as a helical span at residues 25–43; the sequence is WCCVLAGIALFSMGVFLKI. Over 44 to 61 the chain is Lumenal; it reads ELRKRSEVMDNDESHFVP. The helical transmembrane segment at 62 to 80 threads the bilayer; the sequence is NSLILMGSLACALNAFPGK. Over 81–99 the chain is Cytoplasmic; it reads ICYDSLDPTKFPRWKPMLK. The helical transmembrane segment at 100-123 threads the bilayer; it reads PYLIICLIFNIFIFFTGVVCFLTR. At 124–264 the chain is on the lumenal side; it reads GSLESTLAHG…LNYYTSMMSS (141 aa). Residue Asn-229 is glycosylated (N-linked (GlcNAc...) asparagine). The chain crosses the membrane as a helical span at residues 265–290; it reads MGGMVFLVWIMEMAVMIGLRFLHTCL. The Cytoplasmic portion of the chain corresponds to 291 to 346; that stretch reads ETIANPEDPECESEGWILEKSLKDTIKSSWELVKSMGKLNKVETAGGEEAGVATVS.

The protein belongs to the PRPH2/ROM1 family. Homodimer; disulfide-linked. In terms of tissue distribution, found in both rod and cone photoreceptors. Specifically in the rims and incisures of rod and cone outer segment disks.

The protein localises to the membrane. Its function is as follows. May be involved in the morphogenesis of retina outer segment disks and the development and maintenance of the retina ultrastructure. In Xenopus laevis (African clawed frog), this protein is Peripherin-2 (prph2).